Consider the following 103-residue polypeptide: Putative double-stranded DNA mimic protein HAPS_1002 (103 aa).

Belongs to the putative dsDNA mimic protein family.

Functionally, may act as a double-stranded DNA (dsDNA) mimic. Probably regulates the activity of a dsDNA-binding protein. The chain is Putative double-stranded DNA mimic protein HAPS_1002 from Glaesserella parasuis serovar 5 (strain SH0165) (Haemophilus parasuis).